An 89-amino-acid polypeptide reads, in one-letter code: MALTKEEKRQIIEKFRLNENDSGSPEVQIALLTERIKKLTEHLKVHKKDYHSRVGLLKMIGRRRKLLKYLQEKDFERYKKLIQELGLRK.

It belongs to the universal ribosomal protein uS15 family. As to quaternary structure, part of the 30S ribosomal subunit. Forms a bridge to the 50S subunit in the 70S ribosome, contacting the 23S rRNA.

One of the primary rRNA binding proteins, it binds directly to 16S rRNA where it helps nucleate assembly of the platform of the 30S subunit by binding and bridging several RNA helices of the 16S rRNA. Its function is as follows. Forms an intersubunit bridge (bridge B4) with the 23S rRNA of the 50S subunit in the ribosome. This Dictyoglomus turgidum (strain DSM 6724 / Z-1310) protein is Small ribosomal subunit protein uS15.